Reading from the N-terminus, the 134-residue chain is Large ribosomal subunit protein uL18 (134 aa).

A disordered region spans residues 1-25; the sequence is MSNTAQNEKRLPVGKDISTRRRTAR. Over residues 7–19 the composition is skewed to basic and acidic residues; the sequence is NEKRLPVGKDIST.

Belongs to the universal ribosomal protein uL18 family. As to quaternary structure, part of the 50S ribosomal subunit; part of the 5S rRNA/L5/L18/L25 subcomplex. Contacts the 5S and 23S rRNAs.

In terms of biological role, this is one of the proteins that bind and probably mediate the attachment of the 5S RNA into the large ribosomal subunit, where it forms part of the central protuberance. This chain is Large ribosomal subunit protein uL18, found in Corynebacterium jeikeium (strain K411).